The primary structure comprises 496 residues: Cobyric acid synthase (496 aa).

Residues 252 to 442 (DLAVAVIRLP…LHGCFDSDTY (191 aa)) enclose the GATase cobBQ-type domain. Cys333 acts as the Nucleophile in catalysis. His434 is an active-site residue.

The protein belongs to the CobB/CobQ family. CobQ subfamily.

The protein operates within cofactor biosynthesis; adenosylcobalamin biosynthesis. In terms of biological role, catalyzes amidations at positions B, D, E, and G on adenosylcobyrinic A,C-diamide. NH(2) groups are provided by glutamine, and one molecule of ATP is hydrogenolyzed for each amidation. The protein is Cobyric acid synthase of Desulforudis audaxviator (strain MP104C).